A 203-amino-acid polypeptide reads, in one-letter code: MHKAPESVLNALVPMVVEQTAKGERSYDIYSRLLKERVIFLVGQVEEHMANLIVAQLLFLESESPDKDIYLYINSPGGSVTAGMAIYDTMQFIKPNVSTVCIGQAASMGAFLLAGGAEGKRHCLPNSRVMIHQPLGGFQGQASDIAIHAQEILGIKNKLNTMLAEHTGQPLEVIERDTDRDNFMSATEAAEYGLVDSVIAKRG.

Serine 107 acts as the Nucleophile in catalysis. Histidine 132 is a catalytic residue.

The protein belongs to the peptidase S14 family. Fourteen ClpP subunits assemble into 2 heptameric rings which stack back to back to give a disk-like structure with a central cavity, resembling the structure of eukaryotic proteasomes.

The protein resides in the cytoplasm. The enzyme catalyses Hydrolysis of proteins to small peptides in the presence of ATP and magnesium. alpha-casein is the usual test substrate. In the absence of ATP, only oligopeptides shorter than five residues are hydrolyzed (such as succinyl-Leu-Tyr-|-NHMec, and Leu-Tyr-Leu-|-Tyr-Trp, in which cleavage of the -Tyr-|-Leu- and -Tyr-|-Trp bonds also occurs).. In terms of biological role, cleaves peptides in various proteins in a process that requires ATP hydrolysis. Has a chymotrypsin-like activity. Plays a major role in the degradation of misfolded proteins. This chain is ATP-dependent Clp protease proteolytic subunit, found in Shewanella pealeana (strain ATCC 700345 / ANG-SQ1).